A 298-amino-acid chain; its full sequence is Probable endonuclease 4 (298 aa).

Residues histidine 69, histidine 111, glutamate 146, aspartate 180, histidine 183, histidine 215, aspartate 228, histidine 230, and glutamate 260 each contribute to the Zn(2+) site.

The protein belongs to the AP endonuclease 2 family. Zn(2+) serves as cofactor.

It catalyses the reaction Endonucleolytic cleavage to 5'-phosphooligonucleotide end-products.. Functionally, endonuclease IV plays a role in DNA repair. It cleaves phosphodiester bonds at apurinic or apyrimidinic (AP) sites, generating a 3'-hydroxyl group and a 5'-terminal sugar phosphate. This Bacillus cereus (strain AH820) protein is Probable endonuclease 4.